Here is a 197-residue protein sequence, read N- to C-terminus: Dephospho-CoA kinase (197 aa).

In terms of domain architecture, DPCK spans 5-197; that stretch reads RLGLTGSIGM…IAHIRETADA (193 aa). 13-18 is an ATP binding site; sequence GMGKST.

It belongs to the CoaE family.

It localises to the cytoplasm. The enzyme catalyses 3'-dephospho-CoA + ATP = ADP + CoA + H(+). It participates in cofactor biosynthesis; coenzyme A biosynthesis; CoA from (R)-pantothenate: step 5/5. Its function is as follows. Catalyzes the phosphorylation of the 3'-hydroxyl group of dephosphocoenzyme A to form coenzyme A. The sequence is that of Dephospho-CoA kinase from Cereibacter sphaeroides (strain ATCC 17023 / DSM 158 / JCM 6121 / CCUG 31486 / LMG 2827 / NBRC 12203 / NCIMB 8253 / ATH 2.4.1.) (Rhodobacter sphaeroides).